Consider the following 163-residue polypeptide: Nucleotide-binding protein NTHI1194 (163 aa).

It belongs to the YajQ family.

Nucleotide-binding protein. This Haemophilus influenzae (strain 86-028NP) protein is Nucleotide-binding protein NTHI1194.